The sequence spans 384 residues: 1-deoxy-D-xylulose 5-phosphate reductoisomerase (384 aa).

8 residues coordinate NADPH: T10, G11, S12, I13, G36, K37, N38, and N121. K122 contributes to the 1-deoxy-D-xylulose 5-phosphate binding site. Residue E123 coordinates NADPH. D147 contacts Mn(2+). 1-deoxy-D-xylulose 5-phosphate contacts are provided by S148, E149, S173, and H196. E149 lines the Mn(2+) pocket. Residue G202 participates in NADPH binding. 1-deoxy-D-xylulose 5-phosphate-binding residues include S209, N214, K215, and E218. Residue E218 participates in Mn(2+) binding.

This sequence belongs to the DXR family. Mg(2+) serves as cofactor. The cofactor is Mn(2+).

It catalyses the reaction 2-C-methyl-D-erythritol 4-phosphate + NADP(+) = 1-deoxy-D-xylulose 5-phosphate + NADPH + H(+). Its pathway is isoprenoid biosynthesis; isopentenyl diphosphate biosynthesis via DXP pathway; isopentenyl diphosphate from 1-deoxy-D-xylulose 5-phosphate: step 1/6. In terms of biological role, catalyzes the NADPH-dependent rearrangement and reduction of 1-deoxy-D-xylulose-5-phosphate (DXP) to 2-C-methyl-D-erythritol 4-phosphate (MEP). The sequence is that of 1-deoxy-D-xylulose 5-phosphate reductoisomerase from Exiguobacterium sibiricum (strain DSM 17290 / CCUG 55495 / CIP 109462 / JCM 13490 / 255-15).